Reading from the N-terminus, the 206-residue chain is 2,3-bisphosphoglycerate-dependent phosphoglycerate mutase (206 aa).

Substrate is bound by residues 9–16 (RHGQSEWN), 22–23 (TG), Arg61, 88–91 (ERDY), Lys99, 115–116 (RR), and 159–160 (GN). His10 functions as the Tele-phosphohistidine intermediate in the catalytic mechanism. The active-site Proton donor/acceptor is Glu88.

It belongs to the phosphoglycerate mutase family. BPG-dependent PGAM subfamily. In terms of assembly, homodimer.

The catalysed reaction is (2R)-2-phosphoglycerate = (2R)-3-phosphoglycerate. The protein operates within carbohydrate degradation; glycolysis; pyruvate from D-glyceraldehyde 3-phosphate: step 3/5. Its function is as follows. Catalyzes the interconversion of 2-phosphoglycerate and 3-phosphoglycerate. The polypeptide is 2,3-bisphosphoglycerate-dependent phosphoglycerate mutase (Azorhizobium caulinodans (strain ATCC 43989 / DSM 5975 / JCM 20966 / LMG 6465 / NBRC 14845 / NCIMB 13405 / ORS 571)).